The following is a 102-amino-acid chain: Transposable element activator uncharacterized 12 kDa protein (102 aa).

The span at 24 to 51 (HNHNQNHNHSHNLNPKKKHHRRGQRSAH) shows a compositional bias: basic residues. Positions 24 to 55 (HNHNQNHNHSHNLNPKKKHHRRGQRSAHRMYG) are disordered.

This Zea mays (Maize) protein is Transposable element activator uncharacterized 12 kDa protein.